A 432-amino-acid chain; its full sequence is Anaerobic glycerol-3-phosphate dehydrogenase subunit B (432 aa).

Belongs to the anaerobic G-3-P dehydrogenase subunit B family. As to quaternary structure, composed of a catalytic GlpA/B dimer and of membrane bound GlpC. The cofactor is FMN.

The enzyme catalyses a quinone + sn-glycerol 3-phosphate = dihydroxyacetone phosphate + a quinol. Its pathway is polyol metabolism; glycerol degradation via glycerol kinase pathway; glycerone phosphate from sn-glycerol 3-phosphate (anaerobic route): step 1/1. Its function is as follows. Conversion of glycerol 3-phosphate to dihydroxyacetone. Uses fumarate or nitrate as electron acceptor. The protein is Anaerobic glycerol-3-phosphate dehydrogenase subunit B (glpB) of Haemophilus influenzae (strain ATCC 51907 / DSM 11121 / KW20 / Rd).